The sequence spans 158 residues: MVPKLFTSQICLLPLLGLLSAEGSPHARPQQYSRAQWFSIQHIQTAPLHCTSAMRAINKYQSRCKNKNTFLHTTFADVVNVCGNTNMTCPHNASLNNCHHSGVQVPLTYCNLTGPQTISNCVYSSTQANKFYVVACENRDPRDPPQYPVVPVHLDTII.

The signal sequence occupies residues 1–27; it reads MVPKLFTSQICLLPLLGLLSAEGSPHA. Histidine 42 serves as the catalytic Proton acceptor. The residue at position 60 (tyrosine 60) is a 3'-nitrotyrosine. 65 to 69 provides a ligand contact to substrate; the sequence is KNKNT. 3 N-linked (GlcNAc...) asparagine glycosylation sites follow: asparagine 86, asparagine 92, and asparagine 111. Residue histidine 153 is the Proton donor of the active site.

It belongs to the pancreatic ribonuclease family. In terms of assembly, interacts with and forms a tight 1:1 complex with RNH1. Dimerization of two such complexes may occur.

It is found in the lysosome. The protein resides in the cytoplasmic granule. The enzyme catalyses an [RNA] containing cytidine + H2O = an [RNA]-3'-cytidine-3'-phosphate + a 5'-hydroxy-ribonucleotide-3'-[RNA].. The catalysed reaction is an [RNA] containing uridine + H2O = an [RNA]-3'-uridine-3'-phosphate + a 5'-hydroxy-ribonucleotide-3'-[RNA].. Functionally, this is a non-secretory ribonuclease. It is a pyrimidine specific nuclease with a slight preference for U. Cytotoxin and helminthotoxin. Possesses a wide variety of biological activities. This Callithrix jacchus (White-tufted-ear marmoset) protein is Non-secretory ribonuclease (RNASE2).